The sequence spans 200 residues: Small ribosomal subunit protein eS1 (200 aa).

It belongs to the eukaryotic ribosomal protein eS1 family.

In Thermococcus sibiricus (strain DSM 12597 / MM 739), this protein is Small ribosomal subunit protein eS1.